The chain runs to 230 residues: uncharacterized protein (230 aa).

Residues 19–39 traverse the membrane as a helical segment; sequence GIFQVLLQLVLAMMTVWDFAG. Asparagine 41 carries an N-linked (GlcNAc...) asparagine; by host glycan. The chain crosses the membrane as a helical span at residues 55–75; that stretch reads SFLLVLYTGLKQILEYMFSIC. Asparagine 86, asparagine 157, asparagine 168, and asparagine 182 each carry an N-linked (GlcNAc...) asparagine; by host glycan. The stretch at 172–196 forms a coiled coil; it reads TNLHKYQNDENDTEEDSEDIEKNSD. The interval 178 to 205 is disordered; it reads QNDENDTEEDSEDIEKNSDPKENSDIDS. Positions 180–190 are enriched in acidic residues; sequence DENDTEEDSED. The span at 191 to 201 shows a compositional bias: basic and acidic residues; the sequence is IEKNSDPKENS.

Its subcellular location is the membrane. This is an uncharacterized protein from Acanthamoeba polyphaga mimivirus (APMV).